The following is a 516-amino-acid chain: MDIHKEKIIILDFGSQTTQLIARRVREMKVYSEIHPFSLPLEKLKELNPTGIILSGGPCSVYDDDAPHSDAGLFELGVPVFGICYGAQLMIQQLGGSVEKAEKREFGKAEIQILNDSDLFAGLDVARSHQVWMSHGDRVEVIPDQFEVSAESAHSPYAALRHRSKPFVAVQFHPEVVHSIIGTDLLRNFVFGLCKCQATWTMQGFIESNVAAIKEKVGDAHVICALSGGVDSSVVAAMIHKAIGSQLTCVYVNNGLMRIGESEGIIKFFKENTDLHLIDVDASDYFLGKLEGVTDPEVKRQHIGLGFIKIFEEEAHKIDGDVKFLAQGTLYPDVVESVSFRGAAPIKSHHNVGCLPDIMKLSLIEPLRELFKDEVRELGVELGLPDEAVHRQPFPGPGLSIRIMGEVTPERLDIVRRADVIVLDEMKKHGYYNKVWQSFAVLLPIQTVGVMGDFRTYEHVVALRVVDSRDAMTADWSRVPYDILGDISTRIINEVRGVNRVVYDISSKPPATIEWE.

One can recognise a Glutamine amidotransferase type-1 domain in the interval 7-199 (KIIILDFGSQ…VFGLCKCQAT (193 aa)). Cys-84 acts as the Nucleophile in catalysis. Residues His-173 and Glu-175 contribute to the active site. The region spanning 200–391 (WTMQGFIESN…LGLPDEAVHR (192 aa)) is the GMPS ATP-PPase domain. 227-233 (SGGVDSS) lines the ATP pocket.

In terms of assembly, homodimer.

The catalysed reaction is XMP + L-glutamine + ATP + H2O = GMP + L-glutamate + AMP + diphosphate + 2 H(+). It functions in the pathway purine metabolism; GMP biosynthesis; GMP from XMP (L-Gln route): step 1/1. Catalyzes the synthesis of GMP from XMP. The protein is GMP synthase [glutamine-hydrolyzing] of Desulfotalea psychrophila (strain LSv54 / DSM 12343).